The sequence spans 597 residues: Elongation factor 4 (597 aa).

The tr-type G domain occupies Asp-2 to Lys-184. Residues Asp-14–Thr-19 and Asn-131–Asp-134 each bind GTP.

This sequence belongs to the TRAFAC class translation factor GTPase superfamily. Classic translation factor GTPase family. LepA subfamily.

It is found in the cell inner membrane. It catalyses the reaction GTP + H2O = GDP + phosphate + H(+). Required for accurate and efficient protein synthesis under certain stress conditions. May act as a fidelity factor of the translation reaction, by catalyzing a one-codon backward translocation of tRNAs on improperly translocated ribosomes. Back-translocation proceeds from a post-translocation (POST) complex to a pre-translocation (PRE) complex, thus giving elongation factor G a second chance to translocate the tRNAs correctly. Binds to ribosomes in a GTP-dependent manner. The chain is Elongation factor 4 from Paraburkholderia xenovorans (strain LB400).